We begin with the raw amino-acid sequence, 975 residues long: Glycine dehydrogenase (decarboxylating) (975 aa).

Position 723 is an N6-(pyridoxal phosphate)lysine (Lys-723).

Belongs to the GcvP family. The glycine cleavage system is composed of four proteins: P, T, L and H. It depends on pyridoxal 5'-phosphate as a cofactor.

The catalysed reaction is N(6)-[(R)-lipoyl]-L-lysyl-[glycine-cleavage complex H protein] + glycine + H(+) = N(6)-[(R)-S(8)-aminomethyldihydrolipoyl]-L-lysyl-[glycine-cleavage complex H protein] + CO2. Functionally, the glycine cleavage system catalyzes the degradation of glycine. The P protein binds the alpha-amino group of glycine through its pyridoxal phosphate cofactor; CO(2) is released and the remaining methylamine moiety is then transferred to the lipoamide cofactor of the H protein. The chain is Glycine dehydrogenase (decarboxylating) from Burkholderia mallei (strain NCTC 10247).